A 314-amino-acid polypeptide reads, in one-letter code: Acetaldehyde dehydrogenase 1/2 (314 aa).

12-15 (SGNI) is an NAD(+) binding site. Residue Cys130 is the Acyl-thioester intermediate of the active site. NAD(+) is bound by residues 161 to 169 (SAGPGTRAN) and Asn288.

This sequence belongs to the acetaldehyde dehydrogenase family.

It carries out the reaction acetaldehyde + NAD(+) + CoA = acetyl-CoA + NADH + H(+). This chain is Acetaldehyde dehydrogenase 1/2, found in Rhizorhabdus wittichii (strain DSM 6014 / CCUG 31198 / JCM 15750 / NBRC 105917 / EY 4224 / RW1) (Sphingomonas wittichii).